A 369-amino-acid chain; its full sequence is Chaperone protein DnaJ (369 aa).

In terms of domain architecture, J spans 3 to 67 (DHYEVLGVER…QQRQQYDRGG (65 aa)). The CR-type zinc finger occupies 123–205 (GAHRDLEVDT…CQGQGRVRAR (83 aa)). Zn(2+) contacts are provided by Cys136, Cys139, Cys153, Cys156, Cys179, Cys182, Cys193, and Cys196. 4 CXXCXGXG motif repeats span residues 136–143 (CETCDGSC), 153–160 (CDICHGTG), 179–186 (CGSCRGYG), and 193–200 (CVTCQGQG).

This sequence belongs to the DnaJ family. Homodimer. The cofactor is Zn(2+).

Its subcellular location is the cytoplasm. In terms of biological role, participates actively in the response to hyperosmotic and heat shock by preventing the aggregation of stress-denatured proteins and by disaggregating proteins, also in an autonomous, DnaK-independent fashion. Unfolded proteins bind initially to DnaJ; upon interaction with the DnaJ-bound protein, DnaK hydrolyzes its bound ATP, resulting in the formation of a stable complex. GrpE releases ADP from DnaK; ATP binding to DnaK triggers the release of the substrate protein, thus completing the reaction cycle. Several rounds of ATP-dependent interactions between DnaJ, DnaK and GrpE are required for fully efficient folding. Also involved, together with DnaK and GrpE, in the DNA replication of plasmids through activation of initiation proteins. In Leifsonia xyli subsp. xyli (strain CTCB07), this protein is Chaperone protein DnaJ.